A 516-amino-acid chain; its full sequence is L-amino-acid oxidase (516 aa).

A signal peptide spans 1-18 (MNVFFMFSLLFLAALGSC). Cysteine 28 and cysteine 191 are disulfide-bonded. FAD contacts are provided by residues 61–62 (MA), 81–82 (EA), arginine 89, and 105–108 (GPMR). Arginine 108 contacts substrate. Asparagine 190 carries N-linked (GlcNAc...) (complex) asparagine glycosylation. Histidine 241 contributes to the substrate binding site. Residue valine 279 participates in FAD binding. The cysteines at positions 349 and 430 are disulfide-linked. Asparagine 379 carries an N-linked (GlcNAc...) (complex) asparagine glycan. Tyrosine 390 contributes to the substrate binding site. FAD is bound by residues glutamate 475 and 482–487 (GWIDST). A substrate-binding site is contributed by 482 to 483 (GW).

Homodimer; non-covalently linked. It depends on FAD as a cofactor. In terms of processing, N-glycosylated at Asn-190 and Asn-379 with bis-sialylated, biantennary, core-fucosylated dodecasaccharide (composed of N-acetylglucosamine, fucose, mannose, galactose, and sialic acid residues). As to expression, expressed by the venom gland.

Its subcellular location is the secreted. The catalysed reaction is an L-alpha-amino acid + O2 + H2O = a 2-oxocarboxylate + H2O2 + NH4(+). It carries out the reaction L-leucine + O2 + H2O = 4-methyl-2-oxopentanoate + H2O2 + NH4(+). The enzyme catalyses L-phenylalanine + O2 + H2O = 3-phenylpyruvate + H2O2 + NH4(+). It catalyses the reaction L-tryptophan + O2 + H2O = indole-3-pyruvate + H2O2 + NH4(+). The catalysed reaction is L-methionine + O2 + H2O = 4-methylsulfanyl-2-oxobutanoate + H2O2 + NH4(+). It carries out the reaction L-isoleucine + O2 + H2O = (S)-3-methyl-2-oxopentanoate + H2O2 + NH4(+). The enzyme catalyses L-arginine + O2 + H2O = 5-guanidino-2-oxopentanoate + H2O2 + NH4(+). It catalyses the reaction L-aspartate + O2 + H2O = oxaloacetate + H2O2 + NH4(+). The catalysed reaction is L-histidine + O2 + H2O = 3-(imidazol-5-yl)pyruvate + H2O2 + NH4(+). It carries out the reaction L-2-aminohexanoate + O2 + H2O = 2-oxohexanoate + H2O2 + NH4(+). The enzyme catalyses L-2-aminopentanoate + O2 + H2O = 2-oxopentanoate + H2O2 + NH4(+). Its function is as follows. Catalyzes an oxidative deamination of predominantly hydrophobic and aromatic L-amino acids, thus producing hydrogen peroxide that may contribute to the diverse toxic effects of this enzyme. Shows high affinity for L-Phe, L-Trp, L-Met, L-Leu, and L-Ile, moderate affinity for L-Arg, L-Asp, and L-His, and very low affinity for L-Gln, L-Lys, and L-Ala. Also shows high activity on L-norleucine (L-2-aminohexanoate), and L-norvaline (L-2-aminopentanoate) and a weak activity on L-ornithine and L-aminobutyric acid. Also exhibits diverse biological activities, such as hemorrhage, hemolysis, edema, apoptosis of vascular endothelial cells or tumor cell lines, and antiparasitic activities, as well as regulation of platelet aggregation. Its effect on platelets is controversial, since it either induces aggregation or inhibits agonist-induced aggregation. These different effects are probably due to different experimental conditions. A possible explanation of high efficacy it that LAAO may bind to target cells through its sialylated glycan moiety that would bind to sialic acid-binding lectins (siglec) on target cells. This interaction may result in production of locally high concentrations of hydrogen peroxide in or near the binding interface, leading, in turn to oxidative damage of the siglec or another adjacent cell structural elements. This is L-amino-acid oxidase from Calloselasma rhodostoma (Malayan pit viper).